The sequence spans 1565 residues: Synemin (1565 aa).

The interval 1 to 10 is head; sequence MLSWRLQTGP. Positions 11-49 are coil 1A; that stretch reads EKAELQELNARLYDYVCRVRELERENLLLEEELRGRRGR. Residues 11–320 form an interaction with DMD and UTRN region; the sequence is EKAELQELNA…YRALLEGESN (310 aa). Positions 11–322 constitute an IF rod domain; the sequence is EKAELQELNA…ALLEGESNPE (312 aa). Residues 50 to 58 form a linker 1 region; sequence EGLWAEGQA. Residues 59-163 are coil 1B; the sequence is RCAEEARSLR…ELRARAASLT (105 aa). The tract at residues 164–186 is linker 12; that stretch reads MHFRARATGPAAPPPRLREVHDS. The tract at residues 187–300 is coil 2; the sequence is YALLVAESWR…LRDYQDLLQV (114 aa). The tract at residues 301 to 1565 is tail; that stretch reads KTGLSLEVAT…EEEENDGHWF (1265 aa). Positions 401–421 are disordered; sequence SGYSSSATTQQENSYGKAVSS. The span at 402-421 shows a compositional bias: polar residues; the sequence is GYSSSATTQQENSYGKAVSS. Residue Ser-429 is modified to Phosphoserine. Residues 472–609 form a disordered region; the sequence is YRDRRDKVAA…VKDAGGGTGR (138 aa). Residues 498–577 show a composition bias toward basic and acidic residues; it reads KKTEVKATRE…KEKSVREREV (80 aa). Residues Thr-598 and Thr-651 each carry the phosphothreonine modification. Ser-653 and Ser-777 each carry phosphoserine. A compositionally biased stretch (basic and acidic residues) spans 1019–1040; sequence LSKDEASEMEKAVESVVRESLS. The disordered stretch occupies residues 1019–1060; sequence LSKDEASEMEKAVESVVRESLSRQRSPAPGSPDEEGGAEAPA. Ser-1044, Ser-1049, Ser-1077, Ser-1087, Ser-1181, and Ser-1184 each carry phosphoserine. The interval 1080-1105 is disordered; the sequence is SEVAGGASHSSGQRTPQGPVSATVEV. Residues 1087–1105 show a composition bias toward polar residues; the sequence is SHSSGQRTPQGPVSATVEV. Residues 1152–1463 are interaction with TLN1 and VCL; it reads VSAGGDLSQA…GPKETSFTFQ (312 aa). Disordered regions lie at residues 1198-1221 and 1332-1415; these read EAWG…GRHS and QLGE…ETSE. Residues 1244–1563 form an interaction with DMD and UTRN region; it reads GKVGDYFATE…DNEEEENDGH (320 aa). Residues 1354 to 1379 are compositionally biased toward polar residues; that stretch reads ATHSHTSGRQTVMTEKSTFQSVVSES. The residue at position 1435 (Ser-1435) is a Phosphoserine. Omega-N-methylarginine is present on Arg-1487. A disordered region spans residues 1505–1525; sequence FKASAGEGDQAHREQGKEQAM. A compositionally biased stretch (basic and acidic residues) spans 1513–1525; that stretch reads DQAHREQGKEQAM.

It belongs to the intermediate filament family. As to quaternary structure, interacts with GFAP and VIM. Isoform 1 interacts with TLN1 and VCL. Isoform 2 interacts with DES and DTNA. Isoform 1 and isoform 2 interact with DMD and UTRN. In terms of tissue distribution, isoform 2 is strongly detected in adult heart, fetal skeletal muscles and fetal heart. Isoform 1 is weakly detected in fetal heart and also in fetal skeletal muscle. Isoform 1 and isoform 2 are detected in adult bladder (at protein level). The mRNA is predominantly expressed in heart and muscle with some expression in brain which may be due to tissue-specific isoforms.

The protein localises to the cytoplasm. It is found in the cytoskeleton. Its subcellular location is the cell junction. It localises to the adherens junction. Its function is as follows. Type-VI intermediate filament (IF) which plays an important cytoskeletal role within the muscle cell cytoskeleton. It forms heteromeric IFs with desmin and/or vimentin, and via its interaction with cytoskeletal proteins alpha-dystrobrevin, dystrophin, talin-1, utrophin and vinculin, is able to link these heteromeric IFs to adherens-type junctions, such as to the costameres, neuromuscular junctions, and myotendinous junctions within striated muscle cells. This chain is Synemin, found in Homo sapiens (Human).